Here is a 200-residue protein sequence, read N- to C-terminus: Small ribosomal subunit protein uS4c (200 aa).

The S4 RNA-binding domain maps to 90–150 (MRLDNIIFRL…NRKESVIIKN (61 aa)).

Belongs to the universal ribosomal protein uS4 family. Part of the 30S ribosomal subunit. Contacts protein S5. The interaction surface between S4 and S5 is involved in control of translational fidelity.

The protein localises to the plastid. It localises to the chloroplast. In terms of biological role, one of the primary rRNA binding proteins, it binds directly to 16S rRNA where it nucleates assembly of the body of the 30S subunit. Its function is as follows. With S5 and S12 plays an important role in translational accuracy. The sequence is that of Small ribosomal subunit protein uS4c (rps4) from Pellia neesiana (Liverwort).